Here is a 62-residue protein sequence, read N- to C-terminus: Photosystem II reaction center protein Z (62 aa).

2 consecutive transmembrane segments (helical) span residues 8–28 (ALAA…FAYA) and 41–61 (WVGS…NFFV).

It belongs to the PsbZ family. In terms of assembly, PSII is composed of 1 copy each of membrane proteins PsbA, PsbB, PsbC, PsbD, PsbE, PsbF, PsbH, PsbI, PsbJ, PsbK, PsbL, PsbM, PsbT, PsbX, PsbY, PsbZ, Psb30/Ycf12, peripheral proteins PsbO, CyanoQ (PsbQ), PsbU, PsbV and a large number of cofactors. It forms dimeric complexes.

Its subcellular location is the cellular thylakoid membrane. Its function is as follows. May control the interaction of photosystem II (PSII) cores with the light-harvesting antenna, regulates electron flow through the 2 photosystem reaction centers. PSII is a light-driven water plastoquinone oxidoreductase, using light energy to abstract electrons from H(2)O, generating a proton gradient subsequently used for ATP formation. The polypeptide is Photosystem II reaction center protein Z (Gloeothece citriformis (strain PCC 7424) (Cyanothece sp. (strain PCC 7424))).